The chain runs to 101 residues: Large ribosomal subunit protein uL24 (101 aa).

Belongs to the universal ribosomal protein uL24 family. In terms of assembly, part of the 50S ribosomal subunit.

One of two assembly initiator proteins, it binds directly to the 5'-end of the 23S rRNA, where it nucleates assembly of the 50S subunit. In terms of biological role, one of the proteins that surrounds the polypeptide exit tunnel on the outside of the subunit. The protein is Large ribosomal subunit protein uL24 of Borrelia turicatae (strain 91E135).